We begin with the raw amino-acid sequence, 440 residues long: Ankyrin repeat and MYND domain-containing protein 2 (440 aa).

ANK repeat units follow at residues 45–74 (NGMTPLMHAAYKGKLEMCKLLLRHGADASC), 79–108 (HGYTALMFAALSGNKDITWVMLEAGAETDV), and 159–188 (KLAGPLHKIITTTNLHPVKIVMLVSENPLL). Residues C320, C323, C332, C335, C341, C345, H353, and C357 each contribute to the Zn(2+) site. The MYND-type zinc finger occupies 320–357 (CTTCGEKGASKRCSVCKMVIYCDQTCQKTHWFAHKKMC). Over residues 371 to 381 (AAKHKRQEEKN) the composition is skewed to basic and acidic residues. The segment at 371–440 (AAKHKRQEEK…APTGPQLSEE (70 aa)) is disordered.

In terms of assembly, interacts with the retinal-specific guanylyl cyclase GC1.

The protein resides in the cell projection. The protein localises to the cilium. May be involved in the trafficking of signaling proteins to the cilia. This Mus musculus (Mouse) protein is Ankyrin repeat and MYND domain-containing protein 2 (Ankmy2).